The following is a 144-amino-acid chain: Sec-independent protein translocase protein TatB (144 aa).

Residues 1-21 form a helical membrane-spanning segment; it reads MFEIGFWELVLVAIIGIVVVG. Residues 97–144 form a disordered region; sequence KMIDEPPYQEPPPAAHSVQTDAEAYRDTGIEPADKSSSPEHHHDDAAR. Residues 119-144 show a composition bias toward basic and acidic residues; the sequence is EAYRDTGIEPADKSSSPEHHHDDAAR.

This sequence belongs to the TatB family. As to quaternary structure, the Tat system comprises two distinct complexes: a TatABC complex, containing multiple copies of TatA, TatB and TatC subunits, and a separate TatA complex, containing only TatA subunits. Substrates initially bind to the TatABC complex, which probably triggers association of the separate TatA complex to form the active translocon.

It localises to the cell inner membrane. Part of the twin-arginine translocation (Tat) system that transports large folded proteins containing a characteristic twin-arginine motif in their signal peptide across membranes. Together with TatC, TatB is part of a receptor directly interacting with Tat signal peptides. TatB may form an oligomeric binding site that transiently accommodates folded Tat precursor proteins before their translocation. The polypeptide is Sec-independent protein translocase protein TatB (Dichelobacter nodosus (strain VCS1703A)).